Here is a 705-residue protein sequence, read N- to C-terminus: Putative membrane protein SCO0839 (705 aa).

12 consecutive transmembrane segments (helical) span residues 16–36 (WLVP…LGPY), 177–197 (GIDG…LLLV), 202–222 (LLPL…CAIV), 237–257 (VQGI…LLLT), 281–301 (SWGA…ALLL), 316–336 (IGIV…LVLL), 373–393 (IWAL…TLSS), 529–549 (LIVP…LRSL), 554–574 (LLVA…ALVF), 587–607 (VPLY…IFLM), 627–647 (LTAT…TFAA), and 648–668 (LGVI…FGVL).

The protein belongs to the resistance-nodulation-cell division (RND) (TC 2.A.6) family. MmpL subfamily.

It is found in the cell membrane. This chain is Putative membrane protein SCO0839, found in Streptomyces coelicolor (strain ATCC BAA-471 / A3(2) / M145).